Consider the following 431-residue polypeptide: Ornithine aminotransferase, mitochondrial (431 aa).

The residue at position 286 (K286) is an N6-(pyridoxal phosphate)lysine.

Belongs to the class-III pyridoxal-phosphate-dependent aminotransferase family. In terms of assembly, homotetramer. Pyridoxal 5'-phosphate is required as a cofactor.

The protein localises to the mitochondrion matrix. It catalyses the reaction a 2-oxocarboxylate + L-ornithine = L-glutamate 5-semialdehyde + an L-alpha-amino acid. It participates in amino-acid biosynthesis; L-proline biosynthesis; L-glutamate 5-semialdehyde from L-ornithine: step 1/1. The sequence is that of Ornithine aminotransferase, mitochondrial (Oat) from Drosophila melanogaster (Fruit fly).